Consider the following 364-residue polypeptide: Anthranilate phosphoribosyltransferase (364 aa).

Residues 1–10 show a composition bias toward polar residues; sequence MTSGPSQPFP. Residues 1–22 form a disordered region; sequence MTSGPSQPFPSASGPDDGPSWP. Residues Gly-101, 104-105, Thr-109, 111-114, 129-137, and Gly-141 contribute to the 5-phospho-alpha-D-ribose 1-diphosphate site; these read GD, NLST, and KHGNRAASS. Gly-101 is a binding site for anthranilate. A Mg(2+)-binding site is contributed by Ser-113. Asn-132 serves as a coordination point for anthranilate. Anthranilate is bound at residue Arg-187. Mg(2+)-binding residues include Asp-245 and Glu-246.

This sequence belongs to the anthranilate phosphoribosyltransferase family. In terms of assembly, homodimer. Mg(2+) serves as cofactor.

It carries out the reaction N-(5-phospho-beta-D-ribosyl)anthranilate + diphosphate = 5-phospho-alpha-D-ribose 1-diphosphate + anthranilate. It functions in the pathway amino-acid biosynthesis; L-tryptophan biosynthesis; L-tryptophan from chorismate: step 2/5. In terms of biological role, catalyzes the transfer of the phosphoribosyl group of 5-phosphorylribose-1-pyrophosphate (PRPP) to anthranilate to yield N-(5'-phosphoribosyl)-anthranilate (PRA). The protein is Anthranilate phosphoribosyltransferase of Mycolicibacterium smegmatis (strain ATCC 700084 / mc(2)155) (Mycobacterium smegmatis).